Reading from the N-terminus, the 1382-residue chain is DNA-directed RNA polymerase subunit beta (1382 aa).

The protein belongs to the RNA polymerase beta chain family. As to quaternary structure, the RNAP catalytic core consists of 2 alpha, 1 beta, 1 beta' and 1 omega subunit. When a sigma factor is associated with the core the holoenzyme is formed, which can initiate transcription.

It catalyses the reaction RNA(n) + a ribonucleoside 5'-triphosphate = RNA(n+1) + diphosphate. DNA-dependent RNA polymerase catalyzes the transcription of DNA into RNA using the four ribonucleoside triphosphates as substrates. The chain is DNA-directed RNA polymerase subunit beta from Paracoccus denitrificans (strain Pd 1222).